A 304-amino-acid polypeptide reads, in one-letter code: Glutaminase (304 aa).

Residues S63, N114, E158, N165, Y189, Y240, and V258 each contribute to the substrate site.

Belongs to the glutaminase family. As to quaternary structure, homotetramer.

The enzyme catalyses L-glutamine + H2O = L-glutamate + NH4(+). This Shewanella baltica (strain OS155 / ATCC BAA-1091) protein is Glutaminase.